A 672-amino-acid chain; its full sequence is Ubiquitin carboxyl-terminal hydrolase 19 (672 aa).

The chain crosses the membrane as a helical span at residues 11–31; it reads NSFTQLILTLFFVSIGLLYFV. Positions 64, 67, 75, 78, 84, 88, 97, and 101 each coordinate Zn(2+). The segment at 64-101 adopts an MYND-type zinc-finger fold; that stretch reads CSVCGKATTKKCSRCKSVRYCSAACQTSDWKSGHKLKC. The 307-residue stretch at 174-480 folds into the USP domain; that stretch reads CGLTNCGNSC…RAYMLLYSRV (307 aa). Cysteine 183 serves as the catalytic Nucleophile. Histidine 439 serves as the catalytic Proton acceptor. The tract at residues 484 to 672 is disordered; it reads PSNLRSEESQ…HSDTEMIDAQ (189 aa). Residues 488–499 show a composition bias toward basic and acidic residues; that stretch reads RSEESQDEKKTD. Over residues 500 to 527 the composition is skewed to polar residues; the sequence is TLNTESNQDGSVESSGVGTNDTSVSSLC. Composition is skewed to basic and acidic residues over residues 533–543 and 553–594; these read HSEDPEYEKES and EEGK…KEDP. Polar residues predominate over residues 606 to 615; that stretch reads LDITTPSPSA. The span at 623-666 shows a compositional bias: basic and acidic residues; it reads ENERSDTESKPLEKEHSDTESNKPLEKEHLDSESKPLEKEHSDT.

Belongs to the peptidase C19 family.

It localises to the membrane. It carries out the reaction Thiol-dependent hydrolysis of ester, thioester, amide, peptide and isopeptide bonds formed by the C-terminal Gly of ubiquitin (a 76-residue protein attached to proteins as an intracellular targeting signal).. Its function is as follows. Recognizes and hydrolyzes the peptide bond at the C-terminal Gly of ubiquitin. Involved in the processing of poly-ubiquitin precursors as well as that of ubiquitinated proteins. This chain is Ubiquitin carboxyl-terminal hydrolase 19 (UBP19), found in Arabidopsis thaliana (Mouse-ear cress).